A 530-amino-acid polypeptide reads, in one-letter code: UDP-glucuronosyltransferase 2B17 (530 aa).

A signal peptide spans 1 to 23; the sequence is MSLKWMSVFLLMQLSCYFSSGSC. N-linked (GlcNAc...) asparagine glycosylation is present at asparagine 65. N6-succinyllysine is present on lysine 136. N-linked (GlcNAc...) asparagine glycans are attached at residues asparagine 316 and asparagine 483. A helical membrane pass occupies residues 495-515; sequence IAFLLACVATMIFMITKCCLF.

This sequence belongs to the UDP-glycosyltransferase family. Expressed in various tissues including the liver, kidney, testis, uterus, placenta, mammary gland, adrenal gland, skin and prostate.

The protein resides in the endoplasmic reticulum membrane. The catalysed reaction is glucuronate acceptor + UDP-alpha-D-glucuronate = acceptor beta-D-glucuronoside + UDP + H(+). It carries out the reaction 17alpha-estradiol + UDP-alpha-D-glucuronate = 17alpha-estradiol 3-O-(beta-D-glucuronate) + UDP + H(+). The enzyme catalyses 17alpha-estradiol + UDP-alpha-D-glucuronate = 17alpha-estradiol 17-O-(beta-D-glucuronate) + UDP + H(+). It catalyses the reaction 17beta-estradiol + UDP-alpha-D-glucuronate = 17beta-estradiol 17-O-(beta-D-glucuronate) + UDP + H(+). The catalysed reaction is 17beta-hydroxy-5alpha-androstan-3-one + UDP-alpha-D-glucuronate = 5alpha-dihydrotestosterone 17-O-(beta-D-glucuronate) + UDP + H(+). It carries out the reaction testosterone + UDP-alpha-D-glucuronate = testosterone 17-O-(beta-D-glucuronate) + UDP + H(+). In terms of biological role, UDP-glucuronosyltransferase (UGT) that catalyzes phase II biotransformation reactions in which lipophilic substrates are conjugated with glucuronic acid to increase the metabolite's water solubility, thereby facilitating excretion into either the urine or bile. Catalyzes the glucuronidation of endogenous steroid hormones such as androgens (epitestosterone, androsterone) and estrogens (estradiol, epiestradiol). This chain is UDP-glucuronosyltransferase 2B17, found in Homo sapiens (Human).